The chain runs to 344 residues: Ferrochelatase (344 aa).

Residues His-214 and Glu-295 each coordinate Fe cation.

Belongs to the ferrochelatase family.

The protein resides in the cytoplasm. The catalysed reaction is heme b + 2 H(+) = protoporphyrin IX + Fe(2+). It participates in porphyrin-containing compound metabolism; protoheme biosynthesis; protoheme from protoporphyrin-IX: step 1/1. Functionally, catalyzes the ferrous insertion into protoporphyrin IX. The polypeptide is Ferrochelatase (Allorhizobium ampelinum (strain ATCC BAA-846 / DSM 112012 / S4) (Agrobacterium vitis (strain S4))).